We begin with the raw amino-acid sequence, 261 residues long: Early 31 kDa protein (261 aa).

The tract at residues 230–261 is disordered; sequence INKYSADTDEEEEEEEDNAEDTEEEEEEEADQ. Over residues 236 to 261 the composition is skewed to acidic residues; that stretch reads DTDEEEEEEEDNAEDTEEEEEEEADQ.

The sequence is that of Early 31 kDa protein from Frog virus 3 (isolate Goorha) (FV-3).